The sequence spans 131 residues: Lymphocyte antigen 6E (131 aa).

The first 20 residues, 1–20, serve as a signal peptide directing secretion; sequence MKIFLPVLLAALLGVERASS. A UPAR/Ly6 domain is found at 21-101; sequence LMCFSCLNQK…CCQSFLCNFS (81 aa). Disulfide bonds link cysteine 23-cysteine 48, cysteine 26-cysteine 35, cysteine 41-cysteine 71, cysteine 75-cysteine 92, and cysteine 93-cysteine 98. Residue asparagine 99 is glycosylated (N-linked (GlcNAc...) asparagine). The GPI-anchor amidated serine moiety is linked to residue serine 101. Positions 102-131 are cleaved as a propeptide — removed in mature form; it reads AADGGLRASVTLLGAGLLLSLLPALLRFGP.

As to quaternary structure, interacts with CHRNA4. In terms of tissue distribution, widely expressed, predominantly in liver, kidney, ovary, spleen and peripheral blood Leukocytes.

The protein localises to the cell membrane. GPI-anchored cell surface protein that regulates T-lymphocytes proliferation, differentiation, and activation. Regulates the T-cell receptor (TCR) signaling by interacting with component CD3Z/CD247 at the plasma membrane, leading to CD3Z/CD247 phosphorylation modulation. Restricts the entry of human coronaviruses, including SARS-CoV, MERS-CoV and SARS-CoV-2, by interfering with spike protein-mediated membrane fusion. Also plays an essential role in placenta formation by acting as the main receptor for syncytin-A (SynA). Therefore, participates in the normal fusion of syncytiotrophoblast layer I (SynT-I) and in the proper morphogenesis of both fetal and maternal vasculatures within the placenta. May also act as a modulator of nicotinic acetylcholine receptors (nAChRs) activity. Its function is as follows. (Microbial infection) Promotes entry, likely through an enhanced virus-cell fusion process, of various viruses including HIV-1, West Nile virus, dengue virus and Zika virus. In contrast, the paramyxovirus PIV5, which enters at the plasma membrane, does not require LY6E. Mechanistically, adopts a microtubule-like organization upon viral infection and enhances viral uncoating after endosomal escape. The polypeptide is Lymphocyte antigen 6E (Homo sapiens (Human)).